A 254-amino-acid polypeptide reads, in one-letter code: MVGVNFFGDFDLASLAIWSFWAFLAYLIYYLQTENMREGYPLENDDGKLSPNQGPFPVPSPKTFDLADGRKIVVPSVENEEAHRRTDLALERTSVNEGYPFRPTGNPMLDGVGPASWVPRRDEPEVDAHGHNKIQPMRKTEMKVSAGRDPRGMPVQAGDTEVVGKIVDMWVDIPEQLVRYLEVELNSGKKKLLPMTMLKIWSDRVRVNAITSDLFDTIPDIKSPDVVTKLEEDKISAYVAGGYMYAKGVKPYAL.

The chain crosses the membrane as a helical span at residues 12–31; that stretch reads LASLAIWSFWAFLAYLIYYL.

Belongs to the reaction center PuhA family. In terms of assembly, heterotrimer composed of subunits L, M, and H. A bacteriochlorophyll serves as cofactor. The cofactor is a bacteriopheophytin. Requires Fe cation as cofactor. Mg(2+) is required as a cofactor. It depends on a ubiquinone as a cofactor.

It localises to the cellular chromatophore membrane. In terms of biological role, the reaction center is a membrane-bound complex that mediates the initial photochemical event in the electron transfer process of photosynthesis. The polypeptide is Reaction center protein H chain (puhA) (Rhodobacter capsulatus (Rhodopseudomonas capsulata)).